The primary structure comprises 69 residues: UPF0337 protein ECA0631 (69 aa).

It belongs to the UPF0337 (CsbD) family.

The sequence is that of UPF0337 protein ECA0631 from Pectobacterium atrosepticum (strain SCRI 1043 / ATCC BAA-672) (Erwinia carotovora subsp. atroseptica).